The sequence spans 693 residues: Tegument protein UL47 (693 aa).

Disordered regions lie at residues 1–32 (MSAR…DGVG) and 48–126 (ELEA…GYLG). Over residues 48 to 57 (ELEALEEMAG) the composition is skewed to acidic residues. Residues 50 to 75 (EALEEMAGDEPPVRRRREGPRARRRR) form an RNA-binding region. A Nuclear localization signal motif is present at residues 63–75 (RRRREGPRARRRR). A compositionally biased stretch (basic residues) spans 63 to 75 (RRRREGPRARRRR). A Nuclear export signal motif is present at residues 647–670 (SVLGPGVRVVDIMSQFRKLLMGDE).

Belongs to the alphaherpesvirinae HHV-1 UL47 family. Interacts with US3 kinase. Interacts with UL31 and UL34; these interactions seem important for efficient virion nuclear egress. Interacts with UL41/VHS. Phosphorylated by US3. This phosphorylation is required for proper nuclear localization.

It is found in the virion tegument. It localises to the host nucleus. The protein localises to the host cytoplasm. Its function is as follows. Tegument protein that can bind to various RNA transcripts. Plays a role in the attenuation of selective viral and cellular mRNA degradation by modulating the activity of host shutoff RNase UL41/VHS. Also plays a role in the primary envelopment of virions in the perinuclear space, probably by interacting with two nuclear egress proteins UL31 and UL34. This Human herpesvirus 1 (strain F) (HHV-1) protein is Tegument protein UL47.